Reading from the N-terminus, the 229-residue chain is Cytochrome c oxidase subunit 2 (229 aa).

Topologically, residues 1–26 (MSTWANLGLQDSASPLMEQLIFFHDH) are mitochondrial intermembrane. The chain crosses the membrane as a helical span at residues 27–48 (ALLILVMITVLVGYLMFMLFFN). The Mitochondrial matrix portion of the chain corresponds to 49–62 (SYVNRFLLHGQLIE). Residues 63 to 82 (MIWTILPAIILLFIAMPSLR) traverse the membrane as a helical segment. Residues 83-229 (LLYLLDEINE…IKWISNSVNS (147 aa)) are Mitochondrial intermembrane-facing. H161, C196, E198, C200, H204, and M207 together coordinate Cu cation. E198 contacts Mg(2+).

This sequence belongs to the cytochrome c oxidase subunit 2 family. Component of the cytochrome c oxidase (complex IV, CIV), a multisubunit enzyme composed of a catalytic core of 3 subunits and several supernumerary subunits. The complex exists as a monomer or a dimer and forms supercomplexes (SCs) in the inner mitochondrial membrane with ubiquinol-cytochrome c oxidoreductase (cytochrome b-c1 complex, complex III, CIII). The cofactor is Cu cation.

It localises to the mitochondrion inner membrane. It carries out the reaction 4 Fe(II)-[cytochrome c] + O2 + 8 H(+)(in) = 4 Fe(III)-[cytochrome c] + 2 H2O + 4 H(+)(out). Its function is as follows. Component of the cytochrome c oxidase, the last enzyme in the mitochondrial electron transport chain which drives oxidative phosphorylation. The respiratory chain contains 3 multisubunit complexes succinate dehydrogenase (complex II, CII), ubiquinol-cytochrome c oxidoreductase (cytochrome b-c1 complex, complex III, CIII) and cytochrome c oxidase (complex IV, CIV), that cooperate to transfer electrons derived from NADH and succinate to molecular oxygen, creating an electrochemical gradient over the inner membrane that drives transmembrane transport and the ATP synthase. Cytochrome c oxidase is the component of the respiratory chain that catalyzes the reduction of oxygen to water. Electrons originating from reduced cytochrome c in the intermembrane space (IMS) are transferred via the dinuclear copper A center (CU(A)) of subunit 2 and heme A of subunit 1 to the active site in subunit 1, a binuclear center (BNC) formed by heme A3 and copper B (CU(B)). The BNC reduces molecular oxygen to 2 water molecules using 4 electrons from cytochrome c in the IMS and 4 protons from the mitochondrial matrix. This chain is Cytochrome c oxidase subunit 2 (mt:CoII), found in Drosophila miranda (Fruit fly).